The primary structure comprises 301 residues: MADQLIKATAADGGIRAVGVISTRLTEEARARHKLSYVATAALGRAMTAGLLLASNMKREGSRVNLRIKGNGPLGGLLVDAGLDGTVRGYVDCPFVELPPNARGKLDVGGAIGREGYLYVVRDVGYGYPYSSTVELISGEVGDDVTHYLATSEQTPSALLLGVFVGAQGVTAAGGLLLQVMPKAARDEALVATLESRVSQLSGFTPLLRSGKTLPDMFEQLLGDLGLVILPEIQLLRFDCRCSFTRVLGALKMLGEAELQDMIEKDNGAEATCEFCSEVYQASSDHLAQLIDDLRTESVGS.

2 disulfides stabilise this stretch: cysteine 240-cysteine 242 and cysteine 273-cysteine 276.

It belongs to the HSP33 family. Under oxidizing conditions two disulfide bonds are formed involving the reactive cysteines. Under reducing conditions zinc is bound to the reactive cysteines and the protein is inactive.

It is found in the cytoplasm. Its function is as follows. Redox regulated molecular chaperone. Protects both thermally unfolding and oxidatively damaged proteins from irreversible aggregation. Plays an important role in the bacterial defense system toward oxidative stress. This Rippkaea orientalis (strain PCC 8801 / RF-1) (Cyanothece sp. (strain PCC 8801)) protein is 33 kDa chaperonin.